A 136-amino-acid chain; its full sequence is Large ribosomal subunit protein uL16 (136 aa).

The protein belongs to the universal ribosomal protein uL16 family. Part of the 50S ribosomal subunit.

In terms of biological role, binds 23S rRNA and is also seen to make contacts with the A and possibly P site tRNAs. This Shewanella denitrificans (strain OS217 / ATCC BAA-1090 / DSM 15013) protein is Large ribosomal subunit protein uL16.